A 290-amino-acid chain; its full sequence is Arylamine N-acetyltransferase 1 (290 aa).

The residue at position 1 (methionine 1) is an N-acetylmethionine. Residue serine 103 coordinates CoA. 106–107 (IH) lines the substrate pocket. Residue tyrosine 208 coordinates CoA.

The protein belongs to the arylamine N-acetyltransferase family.

The protein localises to the cytoplasm. The enzyme catalyses an arylamine + acetyl-CoA = an N-acetylarylamine + CoA. Participates in the detoxification of a plethora of hydrazine and arylamine drugs. The chain is Arylamine N-acetyltransferase 1 (NAT1) from Bos taurus (Bovine).